The chain runs to 589 residues: Transcription factor MYC4 (589 aa).

A JAZ-interaction domain region spans residues 99–150 (NTVLLGWGDGYYKGEEEKSRKKKSNPASAAEQEHRKRVIRELNSLISGGVGG). Disordered regions lie at residues 114–133 (EEKS…QEHR), 291–326 (AAPV…PNPK), 340–359 (IENG…VSNN), and 381–422 (ASVA…EAER). The span at 296–308 (NNGGNDSTSNSDS) shows a compositional bias: low complexity. The segment covering 309–322 (QPISKLCNGSSVEN) has biased composition (polar residues). A compositionally biased stretch (basic and acidic residues) spans 381-398 (ASVAKEAESNRVVVEPEK). The span at 399 to 408 (KPRKRGRKPA) shows a compositional bias: basic residues. Over residues 409–422 (NGREEPLNHVEAER) the composition is skewed to basic and acidic residues. The bHLH domain occupies 412-461 (EEPLNHVEAERQRREKLNQRFYSLRAVVPNVSKMDKASLLGDAISYISEL).

In terms of assembly, homo- and heterodimer. Interacts with MYB28, MYB29, MYB34, MYB51, MYB76, MYB122, MYC3, AFPH2/NINJA and the JAZ repressors TIFY10A/JAZ1, TIFY10B/JAZ2, TIFY6B/JAZ3, TIFY6A/JAZ4, TIFY11A/JAZ5, TIFY11B/JAZ6, TIFY5B/JAZ7, TIFY5A/JAZ8, TIFY7/JAZ9, TIFY9/JAZ10, TIFY3A/JAZ11 and TIFY3B/JAZ12. As to expression, expressed constitutively at low levels. Preferentially expressed in vascular tissues.

Its subcellular location is the nucleus. Transcription factor involved in jasmonic acid (JA) gene regulation. With MYC2 and MYC3, controls additively subsets of JA-dependent responses. Can form complexes with all known glucosinolate-related MYBs to regulate glucosinolate biosynthesis. Binds to the G-box (5'-CACGTG-3') of promoters. Activates multiple TIFY/JAZ promoters. This chain is Transcription factor MYC4 (MYC4), found in Arabidopsis thaliana (Mouse-ear cress).